Consider the following 551-residue polypeptide: E3 ubiquitin-protein ligase HEL1 (551 aa).

The interval 175-388 (NDFTCIICCD…KNFFQCTMYK (214 aa)) is TRIAD supradomain. The Zn(2+) site is built by Cys179, Cys182, Cys200, Cys203, Cys301, Cys304, His309, Cys314, Cys341, and Cys344. Residues 179–225 (CIICCDKKDTETFALECGHEYCINCYRHYIKDKLHEGNIITCMDCSL) form an RING-type 1 zinc finger. The IBR-type zinc finger occupies 242–314 (SKLMDSSIKS…GFEVHSPADC (73 aa)). The RING-type 2; atypical zinc finger occupies 341-370 (CPKCSVNIEKNGGCNHMVCSSCKYEFCWIC). Cys354 is an active-site residue. Cys359, Cys362, Cys367, Cys370, His377, and Cys384 together coordinate Zn(2+).

This sequence belongs to the RBR family. As to quaternary structure, interacts with the E2 ubiquitin-conjugating enzyme UBC4 and histones H3 and H4.

The enzyme catalyses [E2 ubiquitin-conjugating enzyme]-S-ubiquitinyl-L-cysteine + [acceptor protein]-L-lysine = [E2 ubiquitin-conjugating enzyme]-L-cysteine + [acceptor protein]-N(6)-ubiquitinyl-L-lysine.. Its pathway is protein modification; protein ubiquitination. Probable ubiquitin-protein ligase involved in the degradation-related ubiquitination of histones. Contributes to the post-translational regulation of histone protein levels by polyubiquitination of excess histones for subsequent degradation. The sequence is that of E3 ubiquitin-protein ligase HEL1 from Saccharomyces cerevisiae (strain ATCC 204508 / S288c) (Baker's yeast).